The following is a 681-amino-acid chain: DNA ligase (681 aa).

Residues 32–36 (DIEYD), 81–82 (SL), and Glu113 each bind NAD(+). The active-site N6-AMP-lysine intermediate is the Lys115. Residues Arg136, Glu173, Lys290, and Lys314 each coordinate NAD(+). The Zn(2+) site is built by Cys408, Cys411, Cys426, and Cys432. Residues 596-681 (EIDSPFAGKT…LNNHGDVSTL (86 aa)) form the BRCT domain.

This sequence belongs to the NAD-dependent DNA ligase family. LigA subfamily. Requires Mg(2+) as cofactor. Mn(2+) serves as cofactor.

It carries out the reaction NAD(+) + (deoxyribonucleotide)n-3'-hydroxyl + 5'-phospho-(deoxyribonucleotide)m = (deoxyribonucleotide)n+m + AMP + beta-nicotinamide D-nucleotide.. DNA ligase that catalyzes the formation of phosphodiester linkages between 5'-phosphoryl and 3'-hydroxyl groups in double-stranded DNA using NAD as a coenzyme and as the energy source for the reaction. It is essential for DNA replication and repair of damaged DNA. In Pectobacterium atrosepticum (strain SCRI 1043 / ATCC BAA-672) (Erwinia carotovora subsp. atroseptica), this protein is DNA ligase.